We begin with the raw amino-acid sequence, 35 residues long: SECRWFMGGCDSTLDCCKHLSCKMGLYYCAWDGTF.

Disulfide bonds link C3-C17, C10-C22, and C16-C29. Position 35 is a phenylalanine amide (F35).

The protein belongs to the neurotoxin 10 (Hwtx-1) family. 62 (Vatx) subfamily. Expressed by the venom gland.

Its subcellular location is the secreted. Its function is as follows. Selectively activates mammalian TRPV1, the capsaicin receptor, a non-selective cation channel expressed by sensory neurons of the pain pathway. Is less potent than VaTx2 and VaTx3. Interacts with distinct regions of the channel than capsaicin, since it only acts on the extracellular face of the channel, and capsaicin binds to the cytosolic side. Also activates avian TRPV1, which is insensitive to capsaicin. Significantly inhibits potassium channels Kv2.1/KCNB1. The protein is Tau/kappa-theraphotoxin-Pc1a of Psalmopoeus cambridgei (Trinidad chevron tarantula).